The following is an 810-amino-acid chain: Volume-regulated anion channel subunit LRRC8A (810 aa).

Met1 is modified (N-acetylmethionine). Topologically, residues Met1 to Pro22 are cytoplasmic. The helical transmembrane segment at Trp23 to Val47 threads the bilayer. Residues Thr48 to Lys123 are Extracellular-facing. Disulfide bonds link Cys54/Cys310, Cys57/Cys65, and Cys113/Cys295. 2 N-linked (GlcNAc...) asparagine glycosylation sites follow: Asn66 and Asn83. Residues Tyr124–Phe142 traverse the membrane as a helical segment. Topologically, residues Trp143 to Tyr264 are cytoplasmic. The residue at position 200 (Thr200) is a Phosphothreonine. Ser202 is subject to Phosphoserine. Thr215 carries the phosphothreonine modification. At Ser217 the chain carries Phosphoserine. The chain crosses the membrane as a helical span at residues Met265–Val286. Over His287–Thr316 the chain is Extracellular. A helical transmembrane segment spans residues Leu317–Trp341. The Cytoplasmic segment spans residues Trp342–Ala810. 17 LRR repeats span residues Trp411–Lys422, Asn423–Leu445, Glu447–Leu468, Thr469–Arg492, Glu493–Leu515, Leu518–Glu542, Leu543–Val565, Val567–Lys589, Met590–Leu613, His614–His637, His639–Leu661, Thr662–Cys684, Lys686–Leu707, Gln708–Cys730, Lys732–Leu753, Thr754–Cys776, and Leu778–Arg801. A Di-leucine motif motif is present at residues Leu706–Leu707.

Belongs to the LRRC8 family. As to quaternary structure, heterohexamer; oligomerizes with other LRRC8 proteins (LRRC8B, LRRC8C, LRRC8D and/or LRRC8E) to form a heterohexamer. Can form homohexamers in vitro, but these have lower conductance than heterohexamers. In vivo, the subunit composition may depend primarily on expression levels, and heterooligomeric channels containing various proportions of the different LRRC8 proteins may coexist. Interact with GRB2. Interacts with NOX4; this interaction prevents the ubiquitin-mediated degradation of LRRC8A. N-glycosylated. As to expression, ubiquitously expressed. High levels detected in the bone marrow; lower levels found in peripheral blood cells. Highly expressed in pancreatic beta cells.

The protein localises to the cell membrane. The protein resides in the lysosome membrane. The catalysed reaction is chloride(in) = chloride(out). It carries out the reaction iodide(out) = iodide(in). The enzyme catalyses taurine(out) = taurine(in). It catalyses the reaction L-aspartate(out) = L-aspartate(in). The catalysed reaction is L-glutamate(out) = L-glutamate(in). It carries out the reaction myo-inositol(out) = myo-inositol(in). The enzyme catalyses 2',3'-cGAMP(out) = 2',3'-cGAMP(in). With respect to regulation, inhibited by (4-[(2-butyl-6,7-dichloro-2-cyclopentyl-2,3-dihydro-1-oxo-1H-inden-5-yl)oxy]butanoic acid), which plugs the channel like a cork in a bottle by binding in the extracellular selectivity filter and sterically occluding ion conduction. Lipids may block conduction in closed heterohexameric channels. In terms of biological role, essential component of the volume-regulated anion channel (VRAC, also named VSOAC channel), an anion channel required to maintain a constant cell volume in response to extracellular or intracellular osmotic changes. The VRAC channel conducts iodide better than chloride and can also conduct organic osmolytes like taurine. Mediates efflux of amino acids, such as aspartate and glutamate, in response to osmotic stress. In complex with LRRC8C or LRRC8E, acts as a transporter of immunoreactive cyclic dinucleotide GMP-AMP (2'-3'-cGAMP), an immune messenger produced in response to DNA virus in the cytosol: mediates both import and export of 2'-3'-cGAMP, thereby promoting transfer of 2'-3'-cGAMP to bystander cells. In contrast, complexes containing LRRC8D inhibit transport of 2'-3'-cGAMP. Required for in vivo channel activity, together with at least one other family member (LRRC8B, LRRC8C, LRRC8D or LRRC8E); channel characteristics depend on the precise subunit composition. Can form functional channels by itself (in vitro). Involved in B-cell development: required for the pro-B cell to pre-B cell transition. Also required for T-cell development. Required for myoblast differentiation: VRAC activity promotes membrane hyperpolarization and regulates insulin-stimulated glucose metabolism and oxygen consumption. Also acts as a regulator of glucose-sensing in pancreatic beta cells: VRAC currents, generated in response to hypotonicity- or glucose-induced beta cell swelling, depolarize cells, thereby causing electrical excitation, leading to increase glucose sensitivity and insulin secretion. Also plays a role in lysosome homeostasis by forming functional lysosomal VRAC channels in response to low cytoplasmic ionic strength condition: lysosomal VRAC channels are necessary for the formation of large lysosome-derived vacuoles, which store and then expel excess water to maintain cytosolic water homeostasis. Acts as a key factor in NLRP3 inflammasome activation by modulating itaconate efflux and mitochondria function. The chain is Volume-regulated anion channel subunit LRRC8A from Mus musculus (Mouse).